Reading from the N-terminus, the 152-residue chain is Ubiquitin-conjugating enzyme E2 W (152 aa).

Residue Met-1 forms a Peptide (Met-Gly) (interchain with G-Cter in ubiquitin) linkage. The UBC core domain maps to 4–152; it reads AATRRLMKEL…TRWWFHDDSV (149 aa). Cys-92 serves as the catalytic Glycyl thioester intermediate.

Belongs to the ubiquitin-conjugating enzyme family.

The catalysed reaction is S-ubiquitinyl-[E1 ubiquitin-activating enzyme]-L-cysteine + [E2 ubiquitin-conjugating enzyme]-L-cysteine = [E1 ubiquitin-activating enzyme]-L-cysteine + S-ubiquitinyl-[E2 ubiquitin-conjugating enzyme]-L-cysteine.. It carries out the reaction S-ubiquitinyl-[E1 ubiquitin-activating enzyme]-L-cysteine + [acceptor protein]-N-terminal-amino acid = [E1 ubiquitin-activating enzyme]-L-cysteine + N-terminal-ubiquitinyl-[acceptor protein].. Its pathway is protein modification; protein ubiquitination. Its function is as follows. Accepts ubiquitin from the E1 complex and catalyzes its covalent attachment to other proteins. Together with ubc-18, required for the ubiquitination of membranous organelles, and the removal of paternal mitochondria from early embryos. The protein is Ubiquitin-conjugating enzyme E2 W of Caenorhabditis elegans.